Here is a 426-residue protein sequence, read N- to C-terminus: Putative two-component response regulator ARR20 (426 aa).

A Response regulatory domain is found at 40–155 (SNRVLLVGAD…VIAVLWRHVY (116 aa)). Position 91 is a 4-aspartylphosphate (Asp-91). Positions 161-216 (KSGLDKPGESGTVESDPDEYDDLEQDNLYESNEEGSKNTCDHKEEKSPTKKPRMQW) are disordered. Residues 175–193 (SDPDEYDDLEQDNLYESNE) show a composition bias toward acidic residues. Basic and acidic residues predominate over residues 194–208 (EGSKNTCDHKEEKSP). The Nuclear localization signal signature appears at 210–213 (KKPR). Residues 213–268 (RMQWTPELHHKFEVAVEKMGSLEKAFPKTILKYMQEELNVQGLTRNNVASHLQKYR) constitute a DNA-binding region (myb-like GARP).

The protein belongs to the ARR family. Type-B subfamily. As to quaternary structure, binds the target DNA as a monomer. Post-translationally, two-component system major event consists of a His-to-Asp phosphorelay between a sensor histidine kinase (HK) and a response regulator (RR). In plants, the His-to-Asp phosphorelay involves an additional intermediate named Histidine-containing phosphotransfer protein (HPt). This multistep phosphorelay consists of a His-Asp-His-Asp sequential transfer of a phosphate group between first a His and an Asp of the HK protein, followed by the transfer to a conserved His of the HPt protein and finally the transfer to an Asp in the receiver domain of the RR protein. As to expression, predominantly expressed in mature pistil tip. Also detected in the shoot apical meristem as well as vascular tissue and hydathodes of the leaves.

The protein resides in the nucleus. Its function is as follows. Putative transcriptional activator that binds specifically to the DNA sequence 5'-[AG]GATT-3'. Functions as a response regulator involved in His-to-Asp phosphorelay signal transduction system. Phosphorylation of the Asp residue in the receiver domain activates the ability of the protein to promote the transcription of target genes. Could directly activate some type-A response regulators in response to cytokinins. The chain is Putative two-component response regulator ARR20 (ARR20) from Arabidopsis thaliana (Mouse-ear cress).